A 166-amino-acid chain; its full sequence is 6,7-dimethyl-8-ribityllumazine synthase (166 aa).

Residues Trp31, 63-65, and 85-87 each bind 5-amino-6-(D-ribitylamino)uracil; these read SFE and VII. 90–91 contributes to the (2S)-2-hydroxy-3-oxobutyl phosphate binding site; that stretch reads GT. Catalysis depends on His93, which acts as the Proton donor. A 5-amino-6-(D-ribitylamino)uracil-binding site is contributed by Phe118. Arg132 provides a ligand contact to (2S)-2-hydroxy-3-oxobutyl phosphate.

It belongs to the DMRL synthase family.

It carries out the reaction (2S)-2-hydroxy-3-oxobutyl phosphate + 5-amino-6-(D-ribitylamino)uracil = 6,7-dimethyl-8-(1-D-ribityl)lumazine + phosphate + 2 H2O + H(+). It functions in the pathway cofactor biosynthesis; riboflavin biosynthesis; riboflavin from 2-hydroxy-3-oxobutyl phosphate and 5-amino-6-(D-ribitylamino)uracil: step 1/2. Catalyzes the formation of 6,7-dimethyl-8-ribityllumazine by condensation of 5-amino-6-(D-ribitylamino)uracil with 3,4-dihydroxy-2-butanone 4-phosphate. This is the penultimate step in the biosynthesis of riboflavin. The sequence is that of 6,7-dimethyl-8-ribityllumazine synthase from Cutibacterium acnes (strain DSM 16379 / KPA171202) (Propionibacterium acnes).